Here is a 283-residue protein sequence, read N- to C-terminus: Elongation factor Ts (283 aa).

Residues 80 to 83 (TDFV) are involved in Mg(2+) ion dislocation from EF-Tu.

It belongs to the EF-Ts family.

The protein localises to the cytoplasm. In terms of biological role, associates with the EF-Tu.GDP complex and induces the exchange of GDP to GTP. It remains bound to the aminoacyl-tRNA.EF-Tu.GTP complex up to the GTP hydrolysis stage on the ribosome. This Salmonella gallinarum (strain 287/91 / NCTC 13346) protein is Elongation factor Ts.